The primary structure comprises 435 residues: MNPRLFSPHIIRSLLDLDAYKINMMQAIHHFYPDVSVRYELIVRSEEDASGLLDAIRQEIAHLGTLRFSDADIHYLTQHAPHLKATFLQSLRYFHFVPQEQVEMGIVKQGGKQQLRISIRGSWRDTILYETLVMAIVSEVRSRQRWAEVPADLPLKVLKTKLDQLKAEIERRGINNFSLTEMGTRRRFSSQVQRDVLACLKQEIPQWVLGTSNYHFAREFDLKPIGTIAHEWFMGHQALVNERDSQQVALERWLTAFDGMLAIAPTDTLTIDAFLNDFNRHLANAYDGVRHDSGCPFRWGDKMIAHYQQLGIDPTTKLFIFSDGLDFDQALELCEYFAGRVKISFGIGTFLTNDLANWRNAAGVEYRPLSIVIKLAECQGRPVAKISDQPEKAMCEDPIFLANLKRRFNIELDVDALIQELRHQKRSPRHYISAA.

His-230 carries the phosphohistidine; by autocatalysis modification.

The protein belongs to the NAPRTase family. In terms of processing, transiently phosphorylated on a His residue during the reaction cycle. Phosphorylation strongly increases the affinity for substrates and increases the rate of nicotinate D-ribonucleotide production. Dephosphorylation regenerates the low-affinity form of the enzyme, leading to product release.

It carries out the reaction nicotinate + 5-phospho-alpha-D-ribose 1-diphosphate + ATP + H2O = nicotinate beta-D-ribonucleotide + ADP + phosphate + diphosphate. The protein operates within cofactor biosynthesis; NAD(+) biosynthesis; nicotinate D-ribonucleotide from nicotinate: step 1/1. In terms of biological role, catalyzes the synthesis of beta-nicotinate D-ribonucleotide from nicotinate and 5-phospho-D-ribose 1-phosphate at the expense of ATP. The chain is Nicotinate phosphoribosyltransferase from Vibrio cholerae serotype O1 (strain ATCC 39541 / Classical Ogawa 395 / O395).